Reading from the N-terminus, the 1070-residue chain is DNA-directed RNA polymerase subunit beta (1070 aa).

This sequence belongs to the RNA polymerase beta chain family. As to quaternary structure, in plastids the minimal PEP RNA polymerase catalytic core is composed of four subunits: alpha, beta, beta', and beta''. When a (nuclear-encoded) sigma factor is associated with the core the holoenzyme is formed, which can initiate transcription.

The protein resides in the plastid. The protein localises to the chloroplast. It carries out the reaction RNA(n) + a ribonucleoside 5'-triphosphate = RNA(n+1) + diphosphate. Its function is as follows. DNA-dependent RNA polymerase catalyzes the transcription of DNA into RNA using the four ribonucleoside triphosphates as substrates. The chain is DNA-directed RNA polymerase subunit beta from Vitis vinifera (Grape).